Reading from the N-terminus, the 211-residue chain is MITGKLITVEGPDGAGKTTVLEQLIPLLKQKVAQDILTTREPGGVAISEHIRELILDINHTAMDPKTELLLYIAARRQHLVEKVLPALEAGQLVFIDRFIDSSVAYQGAGRGLIKADIQWLNEFATDGLEPDLTLYFDVPSEIGLARINANQQREVNRLDLETIEIHQRVRKGYLALAKEHPKRIVTIDATKPLKEVVSVALEHVLALLLA.

Gly-11–Thr-18 is a binding site for ATP.

Belongs to the thymidylate kinase family.

It catalyses the reaction dTMP + ATP = dTDP + ADP. Phosphorylation of dTMP to form dTDP in both de novo and salvage pathways of dTTP synthesis. This is Thymidylate kinase from Streptococcus pyogenes serotype M1.